The chain runs to 163 residues: Lipoprotein signal peptidase (163 aa).

A run of 3 helical transmembrane segments spans residues 3-23 (IPLI…IIIL), 70-90 (NYIL…TMYN), and 94-114 (IENF…IGNF). Active-site residues include Asp125 and Asp143. Residues 134–154 (WHFATFNIADVSIFIGSVLFI) traverse the membrane as a helical segment.

It belongs to the peptidase A8 family.

The protein resides in the cell membrane. The catalysed reaction is Release of signal peptides from bacterial membrane prolipoproteins. Hydrolyzes -Xaa-Yaa-Zaa-|-(S,diacylglyceryl)Cys-, in which Xaa is hydrophobic (preferably Leu), and Yaa (Ala or Ser) and Zaa (Gly or Ala) have small, neutral side chains.. It participates in protein modification; lipoprotein biosynthesis (signal peptide cleavage). In terms of biological role, this protein specifically catalyzes the removal of signal peptides from prolipoproteins. The sequence is that of Lipoprotein signal peptidase from Buchnera aphidicola subsp. Baizongia pistaciae (strain Bp).